A 64-amino-acid polypeptide reads, in one-letter code: U2-aranetoxin-Av1a (64 aa).

In terms of tissue distribution, expressed in fat body, but not in cephalothorax, silk gland, midgut.

Insecticidal toxin. The sequence is that of U2-aranetoxin-Av1a from Araneus ventricosus (Orbweaver spider).